Reading from the N-terminus, the 136-residue chain is ATP synthase epsilon chain (136 aa).

The interval 88–136 is disordered; it reads DASSAESDLQAARNEVSKMEGQPASADKVKAQQSLDRARARVQAAKNQD.

The protein belongs to the ATPase epsilon chain family. In terms of assembly, F-type ATPases have 2 components, CF(1) - the catalytic core - and CF(0) - the membrane proton channel. CF(1) has five subunits: alpha(3), beta(3), gamma(1), delta(1), epsilon(1). CF(0) has three main subunits: a, b and c.

It is found in the cellular thylakoid membrane. Functionally, produces ATP from ADP in the presence of a proton gradient across the membrane. This chain is ATP synthase epsilon chain, found in Synechococcus sp. (strain WH7803).